Consider the following 497-residue polypeptide: Cytochrome P450 26A1 (497 aa).

Residue Cys-442 participates in heme binding.

This sequence belongs to the cytochrome P450 family. The cofactor is heme. As to expression, expressed in most fetal and adult tissues with highest levels in adult liver, heart, pituitary gland, adrenal gland, placenta and regions of the brain. Expressed at high levels in lung, pancreas, skin and uterus (at protein level). Lower expression level is detected in spleen, kidney, intestine and adipose tissue (at protein level).

The protein localises to the endoplasmic reticulum membrane. It is found in the microsome membrane. The catalysed reaction is all-trans-retinoate + reduced [NADPH--hemoprotein reductase] + O2 = all-trans-(4S)-hydroxyretinoate + oxidized [NADPH--hemoprotein reductase] + H2O + H(+). It carries out the reaction all-trans-(4S)-hydroxyretinoate + reduced [NADPH--hemoprotein reductase] + O2 = all-trans-(4S,16)-dihydroxyretinoate + oxidized [NADPH--hemoprotein reductase] + H2O + H(+). The enzyme catalyses all-trans-retinoate + reduced [NADPH--hemoprotein reductase] + O2 = all-trans-18-hydroxyretinoate + oxidized [NADPH--hemoprotein reductase] + H2O + H(+). Functionally, a cytochrome P450 monooxygenase involved in the metabolism of retinoates (RAs), the active metabolites of vitamin A, and critical signaling molecules in animals. RAs exist as at least four different isomers: all-trans-RA (atRA), 9-cis-RA, 13-cis-RA, and 9,13-dicis-RA, where atRA is considered to be the biologically active isomer, although 9-cis-RA and 13-cis-RA also have activity. Catalyzes the hydroxylation of atRA primarily at C-4 and C-18, thereby contributing to the regulation of atRA homeostasis and signaling. Hydroxylation of atRA limits its biological activity and initiates a degradative process leading to its eventual elimination. Involved in the convertion of atRA to all-trans-4-oxo-RA. Able to metabolize other RAs such as 9-cis, 13-cis and 9,13-di-cis RA. Can oxidize all-trans-13,14-dihydroretinoate (DRA) to metabolites which could include all-trans-4-oxo-DRA, all-trans-4-hydroxy-DRA, all-trans-5,8-epoxy-DRA, and all-trans-18-hydroxy-DRA. May play a role in the oxidative metabolism of xenobiotics such as tazarotenic acid. This Homo sapiens (Human) protein is Cytochrome P450 26A1.